Consider the following 348-residue polypeptide: GTP 3',8-cyclase (348 aa).

In terms of domain architecture, Radical SAM core spans 24-242 (PFGRAVTYLR…EKQFTLTDID (219 aa)). Residue Arg33 coordinates GTP. [4Fe-4S] cluster contacts are provided by Cys40 and Cys44. Tyr46 is an S-adenosyl-L-methionine binding site. Residue Cys47 participates in [4Fe-4S] cluster binding. Residue Arg82 coordinates GTP. Gly86 lines the S-adenosyl-L-methionine pocket. Thr115 contacts GTP. Ser139 serves as a coordination point for S-adenosyl-L-methionine. Lys175 provides a ligand contact to GTP. Met209 is a binding site for S-adenosyl-L-methionine. Positions 272 and 275 each coordinate [4Fe-4S] cluster. Position 277-279 (277-279 (RVR)) interacts with GTP. Cys289 provides a ligand contact to [4Fe-4S] cluster.

It belongs to the radical SAM superfamily. MoaA family. Monomer and homodimer. [4Fe-4S] cluster is required as a cofactor.

It catalyses the reaction GTP + AH2 + S-adenosyl-L-methionine = (8S)-3',8-cyclo-7,8-dihydroguanosine 5'-triphosphate + 5'-deoxyadenosine + L-methionine + A + H(+). The protein operates within cofactor biosynthesis; molybdopterin biosynthesis. Functionally, catalyzes the cyclization of GTP to (8S)-3',8-cyclo-7,8-dihydroguanosine 5'-triphosphate. The sequence is that of GTP 3',8-cyclase from Rhizobium etli (strain CIAT 652).